The primary structure comprises 142 residues: Transcription antitermination protein NusB (142 aa).

The protein belongs to the NusB family.

Involved in transcription antitermination. Required for transcription of ribosomal RNA (rRNA) genes. Binds specifically to the boxA antiterminator sequence of the ribosomal RNA (rrn) operons. The polypeptide is Transcription antitermination protein NusB (Levilactobacillus brevis (strain ATCC 367 / BCRC 12310 / CIP 105137 / JCM 1170 / LMG 11437 / NCIMB 947 / NCTC 947) (Lactobacillus brevis)).